The sequence spans 87 residues: Sec-independent protein translocase protein TatA (87 aa).

A helical transmembrane segment spans residues 3–23; sequence IFGIGLPEMIVILVVALLIFG. The interval 61 to 87 is disordered; that stretch reads EGVKVSTSASEPEKVVDVSSATNTNKN.

It belongs to the TatA/E family. As to quaternary structure, forms a complex with TatC.

The protein resides in the cell inner membrane. In terms of biological role, part of the twin-arginine translocation (Tat) system that transports large folded proteins containing a characteristic twin-arginine motif in their signal peptide across membranes. TatA could form the protein-conducting channel of the Tat system. This chain is Sec-independent protein translocase protein TatA, found in Trichodesmium erythraeum (strain IMS101).